An 86-amino-acid chain; its full sequence is Large ribosomal subunit protein bL27 (86 aa).

The tract at residues 1–26 (MASKKAGGSTKNGRDSQSKRLGVKRF) is disordered.

It belongs to the bacterial ribosomal protein bL27 family.

This is Large ribosomal subunit protein bL27 from Bdellovibrio bacteriovorus (strain ATCC 15356 / DSM 50701 / NCIMB 9529 / HD100).